A 440-amino-acid chain; its full sequence is Adenylyltransferase and sulfurtransferase UBA4 (440 aa).

An N-acetylmethionine modification is found at methionine 1. Residues glycine 77, aspartate 98, 105–109 (SNLHR), lysine 122, and 166–167 (DS) contribute to the ATP site. Zn(2+) is bound by residues cysteine 208 and cysteine 211. Catalysis depends on cysteine 225, which acts as the Glycyl thioester intermediate; for adenylyltransferase activity. Residues cysteine 286 and cysteine 289 each contribute to the Zn(2+) site. Serine 326 carries the phosphoserine modification. Residues 339-438 (FLAKHIFLDV…YIDDIDQTIP (100 aa)) form the Rhodanese domain. Residue cysteine 397 is the Cysteine persulfide intermediate; for sulfurtransferase activity of the active site.

It in the N-terminal section; belongs to the HesA/MoeB/ThiF family. UBA4 subfamily. Zn(2+) is required as a cofactor.

The protein localises to the cytoplasm. It is found in the cytosol. The protein operates within tRNA modification; 5-methoxycarbonylmethyl-2-thiouridine-tRNA biosynthesis. Functionally, plays a central role in 2-thiolation of mcm(5)S(2)U at tRNA wobble positions of cytosolic tRNA(Lys), tRNA(Glu) and tRNA(Gln). Acts by mediating the C-terminal thiocarboxylation of sulfur carrier URM1. Its N-terminus first activates URM1 as acyl-adenylate (-COAMP), then the persulfide sulfur on the catalytic cysteine is transferred to URM1 to form thiocarboxylation (-COSH) of its C-terminus. The reaction probably involves hydrogen sulfide that is generated from the persulfide intermediate and that acts as a nucleophile towards URM1. Subsequently, a transient disulfide bond is formed. Does not use thiosulfate as sulfur donor; NFS1 probably acting as a sulfur donor for thiocarboxylation reactions. Prior mcm(5) tRNA modification by the elongator complex is required for 2-thiolation. May also be involved in protein urmylation. The sequence is that of Adenylyltransferase and sulfurtransferase UBA4 from Saccharomyces cerevisiae (strain YJM789) (Baker's yeast).